A 446-amino-acid chain; its full sequence is Exodeoxyribonuclease 7 large subunit (446 aa).

It belongs to the XseA family. As to quaternary structure, heterooligomer composed of large and small subunits.

The protein localises to the cytoplasm. It catalyses the reaction Exonucleolytic cleavage in either 5'- to 3'- or 3'- to 5'-direction to yield nucleoside 5'-phosphates.. Its function is as follows. Bidirectionally degrades single-stranded DNA into large acid-insoluble oligonucleotides, which are then degraded further into small acid-soluble oligonucleotides. The polypeptide is Exodeoxyribonuclease 7 large subunit (Streptococcus agalactiae serotype Ia (strain ATCC 27591 / A909 / CDC SS700)).